We begin with the raw amino-acid sequence, 98 residues long: Defensin-like protein 219 (98 aa).

Residues 1–16 form the signal peptide; it reads MKTIFVFLTLAVLVSS. Cystine bridges form between Cys-68/Cys-85, Cys-71/Cys-90, and Cys-75/Cys-92.

The protein belongs to the DEFL family.

The protein localises to the secreted. In Arabidopsis thaliana (Mouse-ear cress), this protein is Defensin-like protein 219.